The sequence spans 373 residues: Putative F-box/kelch-repeat protein At5g24040 (373 aa).

In terms of domain architecture, F-box spans 2-50 (VKWSELPPEILHLISLKIDNPFDLIHFRSVCSFWRSSSLLKFRHMTSLR). 2 Kelch repeats span residues 165–207 (NEYM…PFKG) and 262–308 (YDFH…CTFS).

The chain is Putative F-box/kelch-repeat protein At5g24040 from Arabidopsis thaliana (Mouse-ear cress).